The following is a 450-amino-acid chain: UDP-N-acetylmuramoylalanine--D-glutamate ligase (450 aa).

An ATP-binding site is contributed by G119–T125.

The protein belongs to the MurCDEF family.

The protein resides in the cytoplasm. It carries out the reaction UDP-N-acetyl-alpha-D-muramoyl-L-alanine + D-glutamate + ATP = UDP-N-acetyl-alpha-D-muramoyl-L-alanyl-D-glutamate + ADP + phosphate + H(+). Its pathway is cell wall biogenesis; peptidoglycan biosynthesis. Cell wall formation. Catalyzes the addition of glutamate to the nucleotide precursor UDP-N-acetylmuramoyl-L-alanine (UMA). The sequence is that of UDP-N-acetylmuramoylalanine--D-glutamate ligase from Streptococcus pneumoniae (strain ATCC 700669 / Spain 23F-1).